A 307-amino-acid polypeptide reads, in one-letter code: Methionyl-tRNA formyltransferase (307 aa).

Position 108 to 111 (108 to 111) interacts with (6S)-5,6,7,8-tetrahydrofolate; sequence SLLP.

Belongs to the Fmt family.

It catalyses the reaction L-methionyl-tRNA(fMet) + (6R)-10-formyltetrahydrofolate = N-formyl-L-methionyl-tRNA(fMet) + (6S)-5,6,7,8-tetrahydrofolate + H(+). Its function is as follows. Attaches a formyl group to the free amino group of methionyl-tRNA(fMet). The formyl group appears to play a dual role in the initiator identity of N-formylmethionyl-tRNA by promoting its recognition by IF2 and preventing the misappropriation of this tRNA by the elongation apparatus. In Renibacterium salmoninarum (strain ATCC 33209 / DSM 20767 / JCM 11484 / NBRC 15589 / NCIMB 2235), this protein is Methionyl-tRNA formyltransferase.